We begin with the raw amino-acid sequence, 64 residues long: Large ribosomal subunit protein bL32 (64 aa).

This sequence belongs to the bacterial ribosomal protein bL32 family.

The sequence is that of Large ribosomal subunit protein bL32 from Flavobacterium psychrophilum (strain ATCC 49511 / DSM 21280 / CIP 103535 / JIP02/86).